The chain runs to 138 residues: Cellular retinoic acid-binding protein 2 (138 aa).

A Nuclear localization signal motif is present at residues 21-31 (KVLGVNVMLRK). A Glycyl lysine isopeptide (Lys-Gly) (interchain with G-Cter in SUMO) cross-link involves residue Lys102. 133 to 135 (RVY) provides a ligand contact to all-trans-retinoate.

Belongs to the calycin superfamily. Fatty-acid binding protein (FABP) family. Interacts with importin alpha, RXR and RARA. In terms of processing, sumoylated in response to retinoic acid binding, sumoylation is critical for dissociation from ER and subsequent nuclear translocation.

The protein resides in the cytoplasm. It is found in the endoplasmic reticulum. Its subcellular location is the nucleus. In terms of biological role, transports retinoic acid to the nucleus. Regulates the access of retinoic acid to the nuclear retinoic acid receptors. The chain is Cellular retinoic acid-binding protein 2 (CRABP2) from Bos taurus (Bovine).